A 350-amino-acid polypeptide reads, in one-letter code: Chorismate synthase (350 aa).

Arg-39 and Arg-45 together coordinate NADP(+). Residues Lys-85–Gly-104 are disordered. FMN is bound by residues Arg-119–Ser-121, Gln-213–Gly-214, Gly-258, Lys-273–Thr-277, and Arg-299.

It belongs to the chorismate synthase family. As to quaternary structure, homotetramer. The cofactor is FMNH2.

The catalysed reaction is 5-O-(1-carboxyvinyl)-3-phosphoshikimate = chorismate + phosphate. It participates in metabolic intermediate biosynthesis; chorismate biosynthesis; chorismate from D-erythrose 4-phosphate and phosphoenolpyruvate: step 7/7. Catalyzes the anti-1,4-elimination of the C-3 phosphate and the C-6 proR hydrogen from 5-enolpyruvylshikimate-3-phosphate (EPSP) to yield chorismate, which is the branch point compound that serves as the starting substrate for the three terminal pathways of aromatic amino acid biosynthesis. This reaction introduces a second double bond into the aromatic ring system. This Caldanaerobacter subterraneus subsp. tengcongensis (strain DSM 15242 / JCM 11007 / NBRC 100824 / MB4) (Thermoanaerobacter tengcongensis) protein is Chorismate synthase.